The chain runs to 614 residues: Methionine--tRNA ligase (614 aa).

Positions 11-21 match the 'HIGH' region motif; it reads PYTNGPRHIGH. The Zn(2+) site is built by Cys143, Cys146, Cys156, and Cys159. The 'KMSKS' region motif lies at 359–363; that stretch reads QFSTS. Residue Thr362 coordinates ATP.

Belongs to the class-I aminoacyl-tRNA synthetase family. MetG type 1 subfamily. As to quaternary structure, monomer. Requires Zn(2+) as cofactor.

Its subcellular location is the cytoplasm. It catalyses the reaction tRNA(Met) + L-methionine + ATP = L-methionyl-tRNA(Met) + AMP + diphosphate. Is required not only for elongation of protein synthesis but also for the initiation of all mRNA translation through initiator tRNA(fMet) aminoacylation. The chain is Methionine--tRNA ligase from Beutenbergia cavernae (strain ATCC BAA-8 / DSM 12333 / CCUG 43141 / JCM 11478 / NBRC 16432 / NCIMB 13614 / HKI 0122).